A 339-amino-acid chain; its full sequence is Protein LicA (339 aa).

Repeat copies occupy residues 4–7 (INQS), 8–11 (INQS), 12–15 (INQS), 16–19 (INQS), 20–23 (INQS), 24–27 (INQS), 28–31 (INQS), 32–35 (INQS), and 36–39 (INQS). The tract at residues 4–39 (INQSINQSINQSINQSINQSINQSINQSINQSINQS) is 9 X 4 AA tandem repeats of I-N-Q-S.

The protein belongs to the peptidase S49 family.

Mediates phase variation of the LOS 6A2 and 12D9 epitopes. Phase variation of H.influenza LOS epitopes expressed by LicA is determined by a translational switch. This is Protein LicA (licA) from Haemophilus influenzae.